Here is a 220-residue protein sequence, read N- to C-terminus: Ribosomal RNA small subunit methyltransferase G (220 aa).

S-adenosyl-L-methionine is bound by residues glycine 82, leucine 87, 105-107 (DST), 133-134 (VE), and arginine 147.

The protein belongs to the methyltransferase superfamily. RNA methyltransferase RsmG family.

The protein resides in the cytoplasm. Specifically methylates the N7 position of a guanine in 16S rRNA. This Chlorobium limicola (strain DSM 245 / NBRC 103803 / 6330) protein is Ribosomal RNA small subunit methyltransferase G.